Here is a 96-residue protein sequence, read N- to C-terminus: uncharacterized protein (96 aa).

[3Fe-4S] cluster contacts are provided by cysteine 10, cysteine 16, and cysteine 55. A disordered region spans residues 67 to 96; that stretch reads AGDGERASADPAPSPAEAERHAAKDQHNLG. The span at 83 to 96 shows a compositional bias: basic and acidic residues; it reads EAERHAAKDQHNLG.

The cofactor is [3Fe-4S] cluster.

Electron transport protein for the cytochrome systems. This is an uncharacterized protein from Bradyrhizobium diazoefficiens (strain JCM 10833 / BCRC 13528 / IAM 13628 / NBRC 14792 / USDA 110).